Reading from the N-terminus, the 239-residue chain is Aspartate/glutamate leucyltransferase (239 aa).

This sequence belongs to the R-transferase family. Bpt subfamily.

It is found in the cytoplasm. The enzyme catalyses N-terminal L-glutamyl-[protein] + L-leucyl-tRNA(Leu) = N-terminal L-leucyl-L-glutamyl-[protein] + tRNA(Leu) + H(+). The catalysed reaction is N-terminal L-aspartyl-[protein] + L-leucyl-tRNA(Leu) = N-terminal L-leucyl-L-aspartyl-[protein] + tRNA(Leu) + H(+). Functions in the N-end rule pathway of protein degradation where it conjugates Leu from its aminoacyl-tRNA to the N-termini of proteins containing an N-terminal aspartate or glutamate. This Alkalilimnicola ehrlichii (strain ATCC BAA-1101 / DSM 17681 / MLHE-1) protein is Aspartate/glutamate leucyltransferase.